A 172-amino-acid polypeptide reads, in one-letter code: Peptidyl-prolyl cis-trans isomerase (172 aa).

In terms of domain architecture, PPIase cyclophilin-type spans 10–168; that stretch reads YFDVYANEES…YRIEIRDCGV (159 aa).

Belongs to the cyclophilin-type PPIase family.

It is found in the cytoplasm. The catalysed reaction is [protein]-peptidylproline (omega=180) = [protein]-peptidylproline (omega=0). In terms of biological role, PPIases accelerate the folding of proteins. They catalyze the cis-trans isomerization of proline imidic peptide bonds in oligopeptides. The protein is Peptidyl-prolyl cis-trans isomerase (CPR1) of Encephalitozoon cuniculi (strain GB-M1) (Microsporidian parasite).